The following is a 473-amino-acid chain: ATP synthase subunit beta (473 aa).

158–165 (GGAGVGKT) contributes to the ATP binding site.

Belongs to the ATPase alpha/beta chains family. F-type ATPases have 2 components, CF(1) - the catalytic core - and CF(0) - the membrane proton channel. CF(1) has five subunits: alpha(3), beta(3), gamma(1), delta(1), epsilon(1). CF(0) has three main subunits: a(1), b(2) and c(9-12). The alpha and beta chains form an alternating ring which encloses part of the gamma chain. CF(1) is attached to CF(0) by a central stalk formed by the gamma and epsilon chains, while a peripheral stalk is formed by the delta and b chains.

The protein resides in the cell membrane. It catalyses the reaction ATP + H2O + 4 H(+)(in) = ADP + phosphate + 5 H(+)(out). Functionally, produces ATP from ADP in the presence of a proton gradient across the membrane. The catalytic sites are hosted primarily by the beta subunits. This chain is ATP synthase subunit beta, found in Geobacillus thermoleovorans (Bacillus thermoleovorans).